Consider the following 63-residue polypeptide: Large ribosomal subunit protein uL30 (63 aa).

This sequence belongs to the universal ribosomal protein uL30 family. Part of the 50S ribosomal subunit.

The sequence is that of Large ribosomal subunit protein uL30 from Coxiella burnetii (strain CbuK_Q154) (Coxiella burnetii (strain Q154)).